A 430-amino-acid polypeptide reads, in one-letter code: Serine--tRNA ligase (430 aa).

Position 237-239 (237-239 (TAE)) interacts with L-serine. ATP is bound at residue 268 to 270 (RSE). Glutamate 291 lines the L-serine pocket. 355–358 (EISS) lines the ATP pocket. Serine 391 provides a ligand contact to L-serine.

This sequence belongs to the class-II aminoacyl-tRNA synthetase family. Type-1 seryl-tRNA synthetase subfamily. In terms of assembly, homodimer. The tRNA molecule binds across the dimer.

The protein resides in the cytoplasm. It catalyses the reaction tRNA(Ser) + L-serine + ATP = L-seryl-tRNA(Ser) + AMP + diphosphate + H(+). It carries out the reaction tRNA(Sec) + L-serine + ATP = L-seryl-tRNA(Sec) + AMP + diphosphate + H(+). Its pathway is aminoacyl-tRNA biosynthesis; selenocysteinyl-tRNA(Sec) biosynthesis; L-seryl-tRNA(Sec) from L-serine and tRNA(Sec): step 1/1. Functionally, catalyzes the attachment of serine to tRNA(Ser). Is also able to aminoacylate tRNA(Sec) with serine, to form the misacylated tRNA L-seryl-tRNA(Sec), which will be further converted into selenocysteinyl-tRNA(Sec). This chain is Serine--tRNA ligase, found in Klebsiella pneumoniae subsp. pneumoniae (strain ATCC 700721 / MGH 78578).